The primary structure comprises 274 residues: Dermonecrotic toxin LarSicTox-alphaIV1 (274 aa).

H5 is an active-site residue. Mg(2+)-binding residues include E25 and D27. H41 (nucleophile) is an active-site residue. Cystine bridges form between C45/C51 and C47/C192. Residue D85 participates in Mg(2+) binding.

This sequence belongs to the arthropod phospholipase D family. Class II subfamily. The cofactor is Mg(2+). In terms of tissue distribution, expressed by the venom gland.

The protein localises to the secreted. The catalysed reaction is an N-(acyl)-sphingosylphosphocholine = an N-(acyl)-sphingosyl-1,3-cyclic phosphate + choline. It carries out the reaction an N-(acyl)-sphingosylphosphoethanolamine = an N-(acyl)-sphingosyl-1,3-cyclic phosphate + ethanolamine. It catalyses the reaction a 1-acyl-sn-glycero-3-phosphocholine = a 1-acyl-sn-glycero-2,3-cyclic phosphate + choline. The enzyme catalyses a 1-acyl-sn-glycero-3-phosphoethanolamine = a 1-acyl-sn-glycero-2,3-cyclic phosphate + ethanolamine. In terms of biological role, dermonecrotic toxins cleave the phosphodiester linkage between the phosphate and headgroup of certain phospholipids (sphingolipid and lysolipid substrates), forming an alcohol (often choline) and a cyclic phosphate. This toxin acts on sphingomyelin (SM). It may also act on ceramide phosphoethanolamine (CPE), lysophosphatidylcholine (LPC) and lysophosphatidylethanolamine (LPE), but not on lysophosphatidylserine (LPS), and lysophosphatidylglycerol (LPG). It acts by transphosphatidylation, releasing exclusively cyclic phosphate products as second products. Induces dermonecrosis, hemolysis, increased vascular permeability, edema, inflammatory response, and platelet aggregation. The sequence is that of Dermonecrotic toxin LarSicTox-alphaIV1 from Loxosceles arizonica (Arizona brown spider).